A 243-amino-acid chain; its full sequence is Transcription factor TFIIS homolog (243 aa).

The region spanning 77-201 (MRDIIQMMFF…SQQKVAEKTS (125 aa)) is the TFIIS central domain. The TFIIS-type zinc finger occupies 202–242 (QLYKCPNCKQRMCTYREVQTRALDEPSTIYCTCKKCGHEFI). The Zn(2+) site is built by C206, C209, C234, and C237.

It belongs to the TFS-II family.

In terms of biological role, putative initiation factor. Necessary for efficient transcription elongation past template-encoded arresting sites. This is Transcription factor TFIIS homolog from African swine fever virus (isolate Pig/Kenya/KEN-50/1950) (ASFV).